Consider the following 237-residue polypeptide: MTPQAFYQVLIEHGITLTDKQKKQFETYFRLLVEWNEKINLTAITDKEEVYLKHFYDSIAPILQGYIDNSPLSILDIGAGAGFPSIPMKILYPEIDITIIDSLNKRINFLNILANELELSGVHFFHGRAEDFGQDRVFRAKFDIVTARAVAKMQVLAELTIPFLKVNGRLIALKAAAAEEELISAEKALKTLFSQVTVNKNYKLPNGDDRNITIVSKKKETPNKYPRKAGTPNKKPL.

Residues Gly-78, Phe-83, 129 to 130, and Arg-148 each bind S-adenosyl-L-methionine; that span reads AE. Residues 216–237 form a disordered region; the sequence is SKKKETPNKYPRKAGTPNKKPL.

It belongs to the methyltransferase superfamily. RNA methyltransferase RsmG family.

The protein resides in the cytoplasm. Its function is as follows. Specifically methylates the N7 position of a guanine in 16S rRNA. The polypeptide is Ribosomal RNA small subunit methyltransferase G (Streptococcus agalactiae serotype V (strain ATCC BAA-611 / 2603 V/R)).